A 452-amino-acid chain; its full sequence is Protein CLT3, chloroplastic (452 aa).

Residues 1–34 constitute a chloroplast transit peptide; the sequence is MATTSRRFTTGLFASITSVKSHSANRPQSISLIR. 10 consecutive transmembrane segments (helical) span residues 105–125, 137–157, 175–195, 202–222, 230–250, 258–278, 307–327, 353–373, 389–409, and 412–432; these read AEIVIWAAVTAAFGVGNRVMY, FFLAQLSTFGYVAVYYTILYF, PFLIVGILEALAAAAGMAAAA, TTVLSQTFLVWQIFFSIIFLG, ILGCTLVALGVIVSVASGSGA, GVLWILLMVLSFLLQGAGTVL, FQAICIALLLPFLSKLWGIPF, GAPFLPLLFVIMNIGYNIALL, TVSVPIAVFLFTMPLPYLGVA, and LPKGFMGGTIILVLGMILYSW.

This sequence belongs to the CRT-like transporter family.

The protein resides in the plastid. Its subcellular location is the chloroplast membrane. Functionally, involved in thiol transport from the plastid to the cytosol. Transports probably both glutathione (GSH) and its precursor, gamma-glutamylcysteine (gamma-EC). Exhibits some functional redundancy with CLT1 in maintaining the root GSH pool. This chain is Protein CLT3, chloroplastic, found in Arabidopsis thaliana (Mouse-ear cress).